The following is a 521-amino-acid chain: Cytochrome P450 1A1 (521 aa).

Residue F229 coordinates substrate. Heme is bound at residue C463.

The protein belongs to the cytochrome P450 family. Heme is required as a cofactor.

It localises to the endoplasmic reticulum membrane. Its subcellular location is the microsome membrane. The enzyme catalyses an organic molecule + reduced [NADPH--hemoprotein reductase] + O2 = an alcohol + oxidized [NADPH--hemoprotein reductase] + H2O + H(+). In terms of biological role, cytochromes P450 are a group of heme-thiolate monooxygenases. They oxidize a variety of structurally unrelated compounds, including steroids, fatty acids, and xenobiotics. The polypeptide is Cytochrome P450 1A1 (cyp1a1) (Limanda limanda (Common dab)).